Here is a 196-residue protein sequence, read N- to C-terminus: GTP cyclohydrolase-2 (196 aa).

49–53 (RVHSE) provides a ligand contact to GTP. Zn(2+) is bound by residues Cys-54, Cys-65, and Cys-67. GTP is bound by residues Gln-70, 92 to 94 (EGR), and Thr-114. The active-site Proton acceptor is the Asp-126. The active-site Nucleophile is the Arg-128. Thr-149 and Lys-154 together coordinate GTP.

It belongs to the GTP cyclohydrolase II family. In terms of assembly, homodimer. It depends on Zn(2+) as a cofactor.

It catalyses the reaction GTP + 4 H2O = 2,5-diamino-6-hydroxy-4-(5-phosphoribosylamino)-pyrimidine + formate + 2 phosphate + 3 H(+). The protein operates within cofactor biosynthesis; riboflavin biosynthesis; 5-amino-6-(D-ribitylamino)uracil from GTP: step 1/4. Its function is as follows. Catalyzes the conversion of GTP to 2,5-diamino-6-ribosylamino-4(3H)-pyrimidinone 5'-phosphate (DARP), formate and pyrophosphate. This Salmonella choleraesuis (strain SC-B67) protein is GTP cyclohydrolase-2.